Reading from the N-terminus, the 39-residue chain is Large ribosomal subunit protein bL36 (39 aa).

It belongs to the bacterial ribosomal protein bL36 family.

In Pediococcus pentosaceus (strain ATCC 25745 / CCUG 21536 / LMG 10740 / 183-1w), this protein is Large ribosomal subunit protein bL36.